The following is a 990-amino-acid chain: Fibronectin-binding protein A (990 aa).

The signal sequence occupies residues 1-35; it reads MKNNLRYGIRKHKLGAASVFLGTMIVVGMGQDKEA. The YSIRK-G/S signaling motif motif lies at 7–18; that stretch reads YGIRKHKLGAAS. Disordered stretches follow at residues 33–61 and 96–193; these read KEAATSEQKTTTVEENGNSATDNKVSETQ and PKAV…TEVK. Positions 37 to 55 are enriched in polar residues; the sequence is TSEQKTTTVEENGNSATDN. Residues 37–511 form a ligand-binding A region region; that stretch reads TSEQKTTTVE…SNKADGNGKN (475 aa). Composition is skewed to basic and acidic residues over residues 112-126 and 179-193; these read TVKEEVVKEEEKPQV and DVAEAKEASDVTEVK. A fibrinogen/elastin/tropoelastin-binding region spans residues 194-511; that stretch reads GTDVTSKVTV…SNKADGNGKN (318 aa). The tract at residues 512–834 is fibronectin-binding; it reads GQIIQNNDFE…EGQQTIEEDT (323 aa). The B-1 repeat unit spans residues 545–574; sequence ENQDNTPLDIDYHTAIDGEGGYADGYIETI. A 2 X approximate tandem repeats region spans residues 545-604; it reads ENQDNTPLDIDYHTAIDGEGGYADGYIETIEETDSSAIDIDYHTAVDSEAGHVGGYTESS. One copy of the B-2 repeat lies at 575–604; that stretch reads EETDSSAIDIDYHTAVDSEAGHVGGYTESS. Residues 702–969 form a disordered region; it reads LGYEGGQNSG…EESTNKGMLF (268 aa). One copy of the D-1 repeat lies at 707-744; that stretch reads GQNSGNQSFEEDTEEDKPKYEQGGNIVDIDFDSVPQIQ. The 4 X approximate tandem repeats stretch occupies residues 707–850; sequence GQNSGNQSFE…TPEVPSEPET (144 aa). The segment covering 741–752 has biased composition (polar residues); that stretch reads PQIQGQNNGNQS. Residues 745–782 form a D-2 repeat; it reads GQNNGNQSFEEDTEKDKPKYEQGGNIIDIDFDSVPQIH. The stretch at 783–821 is one D-3 repeat; it reads GFNKHNEIIEEDTNKDKPNYQFGGHNSVDFEEDTLPKVS. Residues 786-800 are compositionally biased toward basic and acidic residues; that stretch reads KHNEIIEEDTNKDKP. The stretch at 822–850 is one D-4; truncated repeat; sequence GQNEGQQTIEEDTTPPTPPTPEVPSEPET. Over residues 836–910 the composition is skewed to pro residues; the sequence is PPTPPTPEVP…PAEPGKPVPP (75 aa). WR repeat units follow at residues 851–864, 865–878, 879–892, 893–906, and 907–920; these read PTPPTPEVPSEPET, PTPPTPEVPAEPGK, and PVPPAEEEPKKPSK. A 5 X tandem repeats, Pro-rich (WR) region spans residues 851–920; that stretch reads PTPPTPEVPS…AEEEPKKPSK (70 aa). An LPXTG sorting signal motif is present at residues 954-958; that stretch reads LPETG. The residue at position 957 (Thr957) is a Pentaglycyl murein peptidoglycan amidated threonine. The propeptide at 958–990 is removed by sortase; it reads GGEESTNKGMLFGGLFSILGLALLRRNKKNHKA.

Its subcellular location is the secreted. The protein localises to the cell wall. Promotes bacterial attachment to multiple substrates, such as fibronectin (Fn), fibrinogen (Fg), elastin peptides and tropoelastin. This confers to S.aureus the ability to invade endothelial cells. Promotes adherence to and aggregation of activated platelets. The sequence is that of Fibronectin-binding protein A (fnbA) from Staphylococcus aureus (strain bovine RF122 / ET3-1).